Reading from the N-terminus, the 211-residue chain is uncharacterized protein (211 aa).

Composition is skewed to low complexity over residues 1–19 (MQDPHVPSSPTISSVSSSD) and 61–74 (SPSVAISRASSSNA). Disordered stretches follow at residues 1 to 27 (MQDPHVPSSPTISSVSSSDLDTESTGS) and 54 to 94 (ASSR…EPHR).

In terms of assembly, interacts with RLK902. As to expression, expressed in inflorescences, stems, rosette leaves and weakly in roots.

This is an uncharacterized protein from Arabidopsis thaliana (Mouse-ear cress).